The primary structure comprises 684 residues: Cyclic nucleotide-gated channel alpha-1 (684 aa).

At M1–L161 the chain is on the cytoplasmic side. The disordered stretch occupies residues A34–K145. Over residues S39–D54 the composition is skewed to acidic residues. Residues S105–K145 are compositionally biased toward basic and acidic residues. Residues F162–E183 form a helical membrane-spanning segment. At L184 to L193 the chain is on the extracellular side. The helical transmembrane segment at I194–G214 threads the bilayer. Over Y215–K239 the chain is Cytoplasmic. A helical transmembrane segment spans residues L240–N258. The Extracellular segment spans residues Y259–R263. A helical transmembrane segment spans residues L264–T282. Topologically, residues R283–I289 are cytoplasmic. An ion conduction pathway region spans residues P287–M395. A helical membrane pass occupies residues F290–I313. The Extracellular portion of the chain corresponds to S314–R336. N-linked (GlcNAc...) asparagine glycosylation is present at N321. The next 2 helical transmembrane spans lie at L337–V371 and V372–N396. Positions T354–E357 are selectivity filter. The segment at A397–A473 is C-linker. Over A397–D684 the chain is Cytoplasmic. The interval A477 to K597 is cyclic nucleotide-binding domain. G537, S540, R553, and T554 together coordinate 3',5'-cyclic GMP. 2 residues coordinate 3',5'-cyclic AMP: R553 and T554. Positions L615 to L669 form a coiled coil.

The protein belongs to the cyclic nucleotide-gated cation channel (TC 1.A.1.5) family. CNGA1 subfamily. As to quaternary structure, forms heterotetrameric channels composed of CNGA1 and CNGB1 subunits with 3:1 stoichiometry. May also form cyclic nucleotide-activated homotetrameric channels, that are efficiently activated by saturating cGMP, but poorly activated by saturating cAMP compared to the heterotetramer with CNGB1. The channel binds Ca(2+)-bound CALM1 via CaM1 and CaM2 regions of the CNGB1 subunit; this interaction modulates the affinity of the channel for cNMPs in response to intracellular Ca(2+) levels. Rod cells in the retina and inner medulla of kidney.

It is found in the cell membrane. The catalysed reaction is Ca(2+)(in) = Ca(2+)(out). It catalyses the reaction Na(+)(in) = Na(+)(out). The enzyme catalyses K(+)(in) = K(+)(out). It carries out the reaction NH4(+)(in) = NH4(+)(out). The catalysed reaction is Rb(+)(in) = Rb(+)(out). It catalyses the reaction Li(+)(in) = Li(+)(out). The enzyme catalyses Cs(+)(in) = Cs(+)(out). Pore-forming subunit of the rod cyclic nucleotide-gated channel. Mediates rod photoresponses at dim light converting transient changes in intracellular cGMP levels into electrical signals. In the dark, cGMP levels are high and keep the channel open enabling a steady inward current carried by Na(+) and Ca(2+) ions that leads to membrane depolarization and neurotransmitter release from synaptic terminals. Upon photon absorption cGMP levels decline leading to channel closure and membrane hyperpolarization that ultimately slows neurotransmitter release and signals the presence of light, the end point of the phototransduction cascade. Conducts cGMP- and cAMP-gated ion currents, with permeability for monovalent and divalent cations. The selectivity for Ca(2+) over Na(+) increases with cGMP concentrations, whereas the selectivity among monovalent ions is independent of the cGMP levels. This Mus musculus (Mouse) protein is Cyclic nucleotide-gated channel alpha-1 (Cnga1).